We begin with the raw amino-acid sequence, 85 residues long: Small ribosomal subunit protein uS17 (85 aa).

It belongs to the universal ribosomal protein uS17 family. Part of the 30S ribosomal subunit.

One of the primary rRNA binding proteins, it binds specifically to the 5'-end of 16S ribosomal RNA. The sequence is that of Small ribosomal subunit protein uS17 from Trichlorobacter lovleyi (strain ATCC BAA-1151 / DSM 17278 / SZ) (Geobacter lovleyi).